The sequence spans 180 residues: NAD(P)H-quinone oxidoreductase subunit I, chloroplastic (180 aa).

4Fe-4S ferredoxin-type domains are found at residues 55–84 (GRIH…VDWK) and 95–124 (LNYS…MTEE). Residues Cys-64, Cys-67, Cys-70, Cys-74, Cys-104, Cys-107, Cys-110, and Cys-114 each contribute to the [4Fe-4S] cluster site.

This sequence belongs to the complex I 23 kDa subunit family. As to quaternary structure, NDH is composed of at least 16 different subunits, 5 of which are encoded in the nucleus. The cofactor is [4Fe-4S] cluster.

It localises to the plastid. The protein resides in the chloroplast thylakoid membrane. It carries out the reaction a plastoquinone + NADH + (n+1) H(+)(in) = a plastoquinol + NAD(+) + n H(+)(out). The catalysed reaction is a plastoquinone + NADPH + (n+1) H(+)(in) = a plastoquinol + NADP(+) + n H(+)(out). In terms of biological role, NDH shuttles electrons from NAD(P)H:plastoquinone, via FMN and iron-sulfur (Fe-S) centers, to quinones in the photosynthetic chain and possibly in a chloroplast respiratory chain. The immediate electron acceptor for the enzyme in this species is believed to be plastoquinone. Couples the redox reaction to proton translocation, and thus conserves the redox energy in a proton gradient. The chain is NAD(P)H-quinone oxidoreductase subunit I, chloroplastic from Ranunculus macranthus (Large buttercup).